Here is a 403-residue protein sequence, read N- to C-terminus: Flavohemoprotein (403 aa).

The Globin domain maps to 1–138 (MLTPEQKAIV…LADLMIGIEK (138 aa)). His85 serves as a coordination point for heme b. Catalysis depends on charge relay system residues Tyr95 and Glu137. The segment at 149–403 (GGWRDFRPFR…SQSFAPVILG (255 aa)) is reductase. Residues 152 to 257 (RDFRPFRVAR…HVPAGDFVLQ (106 aa)) enclose the FAD-binding FR-type domain. FAD contacts are provided by residues Tyr190 and 206-209 (RQYS). An NADP(+)-binding site is contributed by 269 to 274 (GVGITP). Position 390 to 393 (390 to 393 (TFGP)) interacts with FAD.

Belongs to the globin family. Two-domain flavohemoproteins subfamily. This sequence in the C-terminal section; belongs to the flavoprotein pyridine nucleotide cytochrome reductase family. It depends on heme b as a cofactor. Requires FAD as cofactor.

It catalyses the reaction 2 nitric oxide + NADPH + 2 O2 = 2 nitrate + NADP(+) + H(+). The catalysed reaction is 2 nitric oxide + NADH + 2 O2 = 2 nitrate + NAD(+) + H(+). The sequence is that of Flavohemoprotein from Deinococcus radiodurans (strain ATCC 13939 / DSM 20539 / JCM 16871 / CCUG 27074 / LMG 4051 / NBRC 15346 / NCIMB 9279 / VKM B-1422 / R1).